A 134-amino-acid polypeptide reads, in one-letter code: ATP synthase epsilon chain (134 aa).

The protein belongs to the ATPase epsilon chain family. In terms of assembly, F-type ATPases have 2 components, CF(1) - the catalytic core - and CF(0) - the membrane proton channel. CF(1) has five subunits: alpha(3), beta(3), gamma(1), delta(1), epsilon(1). CF(0) has three main subunits: a, b and c.

The protein localises to the cell inner membrane. In terms of biological role, produces ATP from ADP in the presence of a proton gradient across the membrane. The protein is ATP synthase epsilon chain of Rhizobium meliloti (strain 1021) (Ensifer meliloti).